Reading from the N-terminus, the 414-residue chain is Riboflavin biosynthesis protein RibBA (414 aa).

The interval 1–204 is DHBP synthase; it reads MTRFDTIERA…IADMIAWRRK (204 aa). D-ribulose 5-phosphate-binding positions include 28–29, Asp-33, 141–145, and Glu-165; these read RE and RPGHT. Glu-29 serves as a coordination point for Mg(2+). Residue His-144 participates in Mg(2+) binding. Residues 205–414 are GTP cyclohydrolase II; it reads HEKQVVRVAE…DDLDLGETAQ (210 aa). 255 to 259 lines the GTP pocket; sequence RVHSE. Zn(2+) contacts are provided by Cys-260, Cys-271, and Cys-273. GTP contacts are provided by residues Gln-276, 299–301, and Thr-321; that span reads EGR. Asp-333 serves as the catalytic Proton acceptor; for GTP cyclohydrolase activity. Arg-335 functions as the Nucleophile; for GTP cyclohydrolase activity in the catalytic mechanism. Positions 356 and 361 each coordinate GTP.

The protein in the N-terminal section; belongs to the DHBP synthase family. In the C-terminal section; belongs to the GTP cyclohydrolase II family. Mg(2+) serves as cofactor. It depends on Mn(2+) as a cofactor. Zn(2+) is required as a cofactor.

It carries out the reaction D-ribulose 5-phosphate = (2S)-2-hydroxy-3-oxobutyl phosphate + formate + H(+). It catalyses the reaction GTP + 4 H2O = 2,5-diamino-6-hydroxy-4-(5-phosphoribosylamino)-pyrimidine + formate + 2 phosphate + 3 H(+). It participates in cofactor biosynthesis; riboflavin biosynthesis; 2-hydroxy-3-oxobutyl phosphate from D-ribulose 5-phosphate: step 1/1. The protein operates within cofactor biosynthesis; riboflavin biosynthesis; 5-amino-6-(D-ribitylamino)uracil from GTP: step 1/4. In terms of biological role, catalyzes the conversion of D-ribulose 5-phosphate to formate and 3,4-dihydroxy-2-butanone 4-phosphate. Functionally, catalyzes the conversion of GTP to 2,5-diamino-6-ribosylamino-4(3H)-pyrimidinone 5'-phosphate (DARP), formate and pyrophosphate. In Nocardia farcinica (strain IFM 10152), this protein is Riboflavin biosynthesis protein RibBA.